The following is a 291-amino-acid chain: Bis(5'-nucleosyl)-tetraphosphatase, symmetrical (291 aa).

This sequence belongs to the Ap4A hydrolase family.

It carries out the reaction P(1),P(4)-bis(5'-adenosyl) tetraphosphate + H2O = 2 ADP + 2 H(+). In terms of biological role, hydrolyzes diadenosine 5',5'''-P1,P4-tetraphosphate to yield ADP. The polypeptide is Bis(5'-nucleosyl)-tetraphosphatase, symmetrical (Coxiella burnetii (strain CbuG_Q212) (Coxiella burnetii (strain Q212))).